The chain runs to 88 residues: Small ribosomal subunit protein uS15 (88 aa).

Belongs to the universal ribosomal protein uS15 family. In terms of assembly, part of the 30S ribosomal subunit. Forms a bridge to the 50S subunit in the 70S ribosome, contacting the 23S rRNA.

In terms of biological role, one of the primary rRNA binding proteins, it binds directly to 16S rRNA where it helps nucleate assembly of the platform of the 30S subunit by binding and bridging several RNA helices of the 16S rRNA. Forms an intersubunit bridge (bridge B4) with the 23S rRNA of the 50S subunit in the ribosome. The chain is Small ribosomal subunit protein uS15 from Mycoplasmopsis synoviae (strain 53) (Mycoplasma synoviae).